The following is a 246-amino-acid chain: Biosynthetic peptidoglycan transglycosylase (246 aa).

A helical transmembrane segment spans residues 28-48 (FALFLVLFLSSVVLFRFVPVP).

It belongs to the glycosyltransferase 51 family.

It localises to the cell inner membrane. It catalyses the reaction [GlcNAc-(1-&gt;4)-Mur2Ac(oyl-L-Ala-gamma-D-Glu-L-Lys-D-Ala-D-Ala)](n)-di-trans,octa-cis-undecaprenyl diphosphate + beta-D-GlcNAc-(1-&gt;4)-Mur2Ac(oyl-L-Ala-gamma-D-Glu-L-Lys-D-Ala-D-Ala)-di-trans,octa-cis-undecaprenyl diphosphate = [GlcNAc-(1-&gt;4)-Mur2Ac(oyl-L-Ala-gamma-D-Glu-L-Lys-D-Ala-D-Ala)](n+1)-di-trans,octa-cis-undecaprenyl diphosphate + di-trans,octa-cis-undecaprenyl diphosphate + H(+). It participates in cell wall biogenesis; peptidoglycan biosynthesis. Peptidoglycan polymerase that catalyzes glycan chain elongation from lipid-linked precursors. The chain is Biosynthetic peptidoglycan transglycosylase from Pasteurella multocida (strain Pm70).